Consider the following 151-residue polypeptide: Large ribosomal subunit protein bL9 (151 aa).

Belongs to the bacterial ribosomal protein bL9 family.

Binds to the 23S rRNA. The chain is Large ribosomal subunit protein bL9 from Kosmotoga olearia (strain ATCC BAA-1733 / DSM 21960 / TBF 19.5.1).